A 2768-amino-acid polypeptide reads, in one-letter code: MMTLVLWVSTLLSSVCLVAANIFEYQVDAQPLRPCELQREKAFLKQDEYVPQCSEDGSFQTVQCQNDGQSCWCVDSDGTEVPGSRQLGRPTACLSFCQLHKQRILLSSYINSTDALYLPQCQDSGNYAPVQCDLQQVQCWCVDTEGMEVYGTRQQGRPTRCPRSCEIRSRRLLHGVGDKSPPQCDADGEFMPVQCKFVNTTDMMIFDLIHNYNRFPDAFVTFSAFRNRFPEVSGYCYCADSQGRELAETGLELLLDEIYDTIFAGLDQASTFTQSTMYRILQRRFLAIQLVISGRFRCPTKCEVEQFTATSFGHPYIPSCHRDGHYQTVQCQMERMCWCVDAQGIEIPGTRQQGQPLFCAKDQSCASERQQALSRLYFETPGYFSPQDLLSSEDRLVPVSGARLDISCPPRIKELFVDSGLLRSIAVERYQQLSESRSLLREAIRAIFPSRELAGLALQFTTNPKRLQQNLFGGTFLVNAAQLNLSGALGTRSTFNFSQFFQQFGLPGFLVRDRATDLAKLLPVSLDSSPTPVPLRVPEKRVAMNKSVVGTFGFKVNLQENQDALKFLVSLMELPEFLVFLQRAVSVPEDRARDLGDVMEMVFSAQACKQTSGRFFVPSCTAEGSYEDIQCYAGECWCVNSQGKEVEGSRVSGGHPRCPTKCEKQRAQMQNLAGAQPAGSSFFVPTCTSEGYFLPVQCFNSECYCVDAEGQVIPGTQSTIGEPKLCPSVCQLQAEQAFLGVVGVLLSNSSMVPPISSVYIPQCSTSGQWMPVQCDGPHEQVFEWYERWNTQNSDGQELTTATLLMKLMSYREVASTNFSLFLQSLYDAGQQSIFPVLAQYPSLQDVPQVVLEGATIQPGENIFLDPYIFWQILNGQLSQYPGPYSDFSMPLEHFNLRSCWCVDEAGQELDGTRTRAGEIPACPGPCEEVKFRVLKFIKETEEIVSASNASSFPLGESFLVAKGIQLTSEELGLPPLYPSREAFSEKFLRGSEYAIRLAAQSTLTFYQKLRASLGESNGTASLLWSGPYMPQCNTIGGWEPVQCHPGTGQCWCVDGWGELIPGSLMARSSQMPQCPTSCELSRANGLISAWKQAGHQRNPGPGDLFTPVCLQTGEYVRQQTSGTGAWCVDPSSGEGVPTNTNSSAQCPGLCDALKSRVLSRKVGLGYTPVCEALDGGFSPVQCDLAQGSCWCVLASGEEVPGTRVVGTQPACESPQCPLPFSGSDVTDGVVFCETASSSGVTTVQQCQLFCRQGLRNVFSPGPLICNLESQRWVTLPLPRACQRPQLWQTMQTQAHFQLLLPPGKMCSIDYSGLLQAFQVFILDELITRGFCQIQVKTFGTLVSRTVCDNSSIQVGCLTAERLGVNATWKLQLEDISVGSLPNLHSIERALMGQDLLGRFANLIQSGKFQLHLDSKTFSADTILYFLNGDRFVTSPMTQLGCLEGFYRVSTTSQDPLGCVKCPEGSFSQDGKCTPCPAGTYQGQAGSSACIPCPRGRTTTITGAFSKTHCVTDCQRDEAGLQCDQNGQYQANQKDMDSGEVFCVDSEGQRLQWLQTEAGLSESQCLMMRKFEKAPESKVIFDASSPVIVKSRVPSANSPLVQCLADCADDEACSFVTVSSMSSEVSCDLYSWTRDNFACVTSDQEEDAVDSLKETSFGSLRCQVKVRNSGKDSLAVYVKKGHEFTASGQKSFEPTGFQNVLSGLYSSVVFSALGTNLTDTHLFCLLACDQDSCCDGFIVTQVKEGPTICGLLSAPDILVCHINDWRDASDTQANGTCAGVTYDQGSRQMTMSLGGQEFLQGLTLLEGTQDSFISFQQVYLWKDSDIGSRPESMGCGRGMVPKSEAPEGADMATELFSPVDITQVIVNTSHSLPSQQYWLSTHLFSAEQANLWCLSRCAQEPVFCQLADIMESSSLYFTCSLYPEAQVCDNDVESNAKNCSQILPRQPTALFQRKVVLNDRVKNFYTRLPFQKLSGISIRDRIPMSEKLISNGFFECERLCDRDPCCTGFGFLNVSQMQGGEMTCLTLNSMGIQTCSEENGATWRILDCGSEDTEVHTYPFGWYQKPAVWSDAPSFCPSAALQSLTEEKVALDSWQTLALSSVIIDPSIKHFDVAHISISATRNFSLAQDFCLQECSRHQDCLVTTLQIQQGVVRCVFYPDIQSCEHSLRSKTCWLLLHEEAAYIYRKSGAPLHQSDGISTPSVHIDSFGQLQGGSQVVKVGTAWKQVYQFLGVPYAAPPLAENRFQAPEVLNWTGSWDATKLRSSCWQPGTRTPTPPQISEDCLYLNVFVPENLVSNASVLVFFHNTVEMEGSGGQLNIDGSILAAVGNLIVVTANYRLGVFGFLSSGSDEVAGNWGLLDQVAALTWVQTHIGAFGGDPQRVTLAADRGGADVASIHLLITRPTRLQLFRKALLMGGSALSPAAIISPDRAQQQAAALAKEVGCPNSSVQEVVSCFRQKPANILNEAQTKLLAVSGPFHYWGPVVDGQYLRELPSRRLKRPLPVKVDLLIGGSQDDGLINRAKAVKQFEESQGRTNSKTAFYQALQNSLGGEDSDARILAAAIWYYSLEHSTDDYASFSRALENATRDYFIICPIVNMASLWARRTRGNVFMYHVPESYGHGSLELLADVQYAFGLPFYSAYQGYFSTEEQSLSLKVMQYFSNFIRSGNPNYPHEFSQKAAEFATPWPDFVPGAGGESYKELSAQLPNRQGLKKADCSFWSKYIQTLKDADGAKDAQLTKSGEEDLEVGPGSEEDFSGSLEPVPKSYSK.

The N-terminal stretch at 1–20 (MMTLVLWVSTLLSSVCLVAA) is a signal peptide. Iodotyrosine; alternate is present on Tyr-25. The residue at position 25 (Tyr-25) is a Sulfotyrosine; alternate. Thyroxine; alternate is present on Tyr-25. Residue Tyr-25 is modified to Triiodothyronine; alternate. Thyroglobulin type-1 domains lie at 32-93 (LRPC…PTAC), 94-161 (LSFC…PTRC), 162-298 (PRSC…RFRC), and 299-359 (PTKC…PLFC). 8 disulfide bridges follow: Cys-35–Cys-53, Cys-64–Cys-71, Cys-73–Cys-93, Cys-97–Cys-121, Cys-132–Cys-139, Cys-141–Cys-161, Cys-165–Cys-184, and Cys-195–Cys-236. Tyr-109 is modified (iodotyrosine). Asn-111 carries N-linked (GlcNAc...) asparagine glycosylation. Tyr-150 carries the post-translational modification Iodotyrosine; alternate. At Tyr-150 the chain carries Diiodotyrosine; alternate. The N-linked (GlcNAc...) asparagine glycan is linked to Asn-199. Tyr-235 and Tyr-259 each carry iodotyrosine. 8 disulfide bridges follow: Cys-302–Cys-320, Cys-331–Cys-337, Cys-339–Cys-365, Cys-408–Cys-608, Cys-631–Cys-636, Cys-638–Cys-658, Cys-662–Cys-687, and Cys-698–Cys-703. Asn-484, Asn-496, and Asn-545 each carry an N-linked (GlcNAc...) asparagine glycan. 6 Thyroglobulin type-1 domains span residues 605–658 (AQAC…HPRC), 659–726 (PTKC…PKLC), 727–922 (PSVC…IPAC), 923–1074 (PGPC…MPQC), 1075–1146 (PTSC…SAQC), and 1147–1211 (PGLC…QPAC). At Tyr-704 the chain carries Iodotyrosine; alternate. Residue Tyr-704 is modified to Thyroxine; alternate. At Tyr-704 the chain carries Triiodothyronine; alternate. Position 704 is a diiodotyrosine; alternate (Tyr-704). Disulfide bonds link Cys-705/Cys-726, Cys-730/Cys-763, Cys-774/Cys-899, Cys-901/Cys-922, Cys-926/Cys-1032, Cys-1043/Cys-1050, Cys-1052/Cys-1074, Cys-1078/Cys-1109, Cys-1127/Cys-1146, Cys-1150/Cys-1170, Cys-1182/Cys-1189, Cys-1191/Cys-1211, Cys-1216/Cys-1265, Cys-1232/Cys-1246, Cys-1306/Cys-1356, and Cys-1331/Cys-1347. The N-linked (GlcNAc...) asparagine glycan is linked to Asn-748. Tyr-785 bears the Iodotyrosine mark. A glycan (N-linked (GlcNAc...) asparagine) is linked at Asn-817. The residue at position 867 (Tyr-867) is an Iodotyrosine; alternate. Tyr-867 bears the Diiodotyrosine; alternate mark. Tyr-884 is subject to Diiodotyrosine. Residue Asn-948 is glycosylated (N-linked (GlcNAc...) asparagine). Tyr-993 bears the Iodotyrosine; alternate mark. Tyr-993 carries the post-translational modification Diiodotyrosine; alternate. N-linked (GlcNAc...) asparagine glycosylation occurs at Asn-1017. Residue Asn-1141 is glycosylated (N-linked (GlcNAc...) asparagine). An Iodotyrosine modification is found at Tyr-1310. The residue at position 1310 (Tyr-1310) is a Thyroxine. Residues Asn-1349 and Asn-1365 are each glycosylated (N-linked (GlcNAc...) asparagine). 9 disulfides stabilise this stretch: Cys-1441-Cys-1458, Cys-1461-Cys-1472, Cys-1475-Cys-1489, Cys-1492-Cys-1509, Cys-1513-Cys-1522, Cys-1542-Cys-1564, Cys-1602-Cys-1626, Cys-1606-Cys-1612, and Cys-1638-Cys-1661. Type II repeat units lie at residues 1455–1468 (PLGC…SFSQ), 1469–1485 (DGKC…GQAG), and 1486–1502 (SSAC…TITG). Residues 1510–1564 (VTDCQRDEAGLQCDQNGQYQANQKDMDSGEVFCVDSEGQRLQWLQTEAGLSESQC) form the Thyroglobulin type-1 11 domain. The stretch at 1602–1722 (CLADCADDEA…GTNLTDTHLF (121 aa)) is one Type IIIA repeat. N-linked (GlcNAc...) asparagine glycosylation is present at Asn-1715. 4 disulfides stabilise this stretch: Cys-1723–Cys-1748, Cys-1727–Cys-1733, Cys-1732–Cys-1834, and Cys-1759–Cys-1776. The Type IIIB repeat unit spans residues 1723 to 1891 (CLLACDQDSC…LFSAEQANLW (169 aa)). 2 N-linked (GlcNAc...) asparagine glycosylation sites follow: Asn-1773 and Asn-1866. 7 cysteine pairs are disulfide-bonded: Cys-1892–Cys-1918, Cys-1896–Cys-1903, Cys-1927–Cys-1938, Cys-1995–Cys-2023, Cys-1999–Cys-2005, Cys-2004–Cys-2075, and Cys-2034–Cys-2047. One copy of the Type IIIA repeat lies at 1892 to 1994 (CLSRCAQEPV…EKLISNGFFE (103 aa)). N-linked (GlcNAc...) asparagine glycosylation is present at Asn-1937. The Type IIIB repeat unit spans residues 1995-2127 (CERLCDRDPC…SATRNFSLAQ (133 aa)). Asn-2012 is a glycosylation site (N-linked (GlcNAc...) asparagine). Residue Asn-2122 is glycosylated (N-linked (GlcNAc...) asparagine). The Type IIIA repeat unit spans residues 2128-2185 (DFCLQECSRHQDCLVTTLQIQQGVVRCVFYPDIQSCEHSLRSKTCWLLLHEEAAYIYR). 3 disulfides stabilise this stretch: Cys-2130–Cys-2154, Cys-2134–Cys-2140, and Cys-2163–Cys-2172. The residue at position 2184 (Tyr-2184) is an Iodotyrosine. The segment at 2188–2768 (GAPLHQSDGI…LEPVPKSYSK (581 aa)) is cholinesterase-like (ChEL). Asn-2251 is a glycosylation site (N-linked (GlcNAc...) asparagine). Cys-2265 and Cys-2282 are oxidised to a cystine. N-linked (GlcNAc...) asparagine glycans are attached at residues Asn-2296 and Asn-2445. Cys-2443 and Cys-2454 form a disulfide bridge. A Thyroxine modification is found at Tyr-2541. Tyr-2574 bears the Iodotyrosine; alternate mark. A Thyroxine; alternate modification is found at Tyr-2574. A Triiodothyronine; alternate modification is found at Tyr-2574. At Tyr-2574 the chain carries Diiodotyrosine; alternate. A glycan (N-linked (GlcNAc...) asparagine) is linked at Asn-2583. Iodotyrosine occurs at positions 2588 and 2618. Cysteines 2592 and 2716 form a disulfide. At Tyr-2698 the chain carries Diiodotyrosine. Residues 2731–2768 (GAKDAQLTKSGEEDLEVGPGSEEDFSGSLEPVPKSYSK) are disordered. Over residues 2743–2755 (EDLEVGPGSEEDF) the composition is skewed to acidic residues. Residue Tyr-2766 is modified to Iodotyrosine; alternate. The residue at position 2766 (Tyr-2766) is a Thyroxine; alternate. Tyr-2766 is modified (triiodothyronine; alternate). Diiodotyrosine; alternate is present on Tyr-2766.

The protein belongs to the type-B carboxylesterase/lipase family. Monomer. Homodimer (via ChEL region); occurs in the endoplasmic reticulum and is required for export to the Golgi apparatus. Homooligomer; disulfide-linked; stored in this form in the thyroid follicle lumen. Post-translationally, iodinated on tyrosine residues by TPO. There are 4 pairs of iodinated tyrosines used for coupling: acceptor Tyr-25 is coupled to donor Tyr-150 or Tyr-235, acceptor Tyr-2574 is coupled to donor Tyr-2541, acceptor Tyr-2766 in monomer 1 is coupled to donor Tyr-2766 in monomer 2 and acceptor Tyr-1310 in monomer 1 is coupled to donor Tyr-109 in monomer 2. In terms of processing, sulfated tyrosines are desulfated during iodination. Undergoes sequential proteolysis by cathepsins to release thyroxine (T4) and triiodothyronine (T3) hormones. In the thyroid follicle lumen, cross-linked TG (storage form) is solubilized by limited proteolysis mediated by cathepsins CTSB and/or CTSL. Partially cleaved TG is further processed by CTSK/cathepsin K and/or CTSL resulting in the release of thyroxine (T4). Following endocytosis, further processing occurs leading to the release of triiodothyronine (T3) and more T4 hormones. As to expression, specifically expressed in the thyroid gland.

Its subcellular location is the secreted. Its function is as follows. Acts as a substrate for the production of iodinated thyroid hormones thyroxine (T4) and triiodothyronine (T3). The synthesis of T3 and T4 involves iodination of selected tyrosine residues of TG/thyroglobulin followed by their oxidative coupling. Following TG re-internalization and lysosomal-mediated proteolysis, T3 and T4 are released from the polypeptide backbone leading to their secretion into the bloodstream. One dimer produces 7 thyroid hormone molecules. The polypeptide is Thyroglobulin (Tg) (Rattus norvegicus (Rat)).